The primary structure comprises 250 residues: 5-oxoprolinase subunit A (250 aa).

Belongs to the LamB/PxpA family. As to quaternary structure, forms a complex composed of PxpA, PxpB and PxpC.

The catalysed reaction is 5-oxo-L-proline + ATP + 2 H2O = L-glutamate + ADP + phosphate + H(+). Catalyzes the cleavage of 5-oxoproline to form L-glutamate coupled to the hydrolysis of ATP to ADP and inorganic phosphate. This is 5-oxoprolinase subunit A from Staphylococcus haemolyticus (strain JCSC1435).